A 1334-amino-acid polypeptide reads, in one-letter code: DNA-directed RNA polymerase subunit beta' (1334 aa).

Zn(2+) is bound by residues Cys213, Cys284, Cys291, and Cys294. The span at 1299–1308 shows a compositional bias: low complexity; it reads SSRGSSRFSR. Residues 1299-1334 are disordered; that stretch reads SSRGSSRFSRQPISDRWSEADEEGEEDDFEEDYEEE. Acidic residues predominate over residues 1318 to 1334; sequence ADEEGEEDDFEEDYEEE.

It belongs to the RNA polymerase beta' chain family. RpoC2 subfamily. In terms of assembly, in cyanobacteria the RNAP catalytic core is composed of 2 alpha, 1 beta, 1 beta', 1 gamma and 1 omega subunit. When a sigma factor is associated with the core the holoenzyme is formed, which can initiate transcription. Requires Zn(2+) as cofactor.

The enzyme catalyses RNA(n) + a ribonucleoside 5'-triphosphate = RNA(n+1) + diphosphate. Its function is as follows. DNA-dependent RNA polymerase catalyzes the transcription of DNA into RNA using the four ribonucleoside triphosphates as substrates. The protein is DNA-directed RNA polymerase subunit beta' of Microcystis aeruginosa (strain NIES-843 / IAM M-2473).